The sequence spans 52 residues: uncharacterized protein (52 aa).

The disordered stretch occupies residues 24-52 (LRENPSKNVRTIPDAGDENSSFGHARVIA).

This is an uncharacterized protein from Treponema pallidum (strain Nichols).